Consider the following 250-residue polypeptide: Ribosomal RNA small subunit methyltransferase J (250 aa).

S-adenosyl-L-methionine contacts are provided by residues 101–102 (RD), 117–118 (ER), 153–154 (SS), and D171.

Belongs to the methyltransferase superfamily. RsmJ family.

Its subcellular location is the cytoplasm. The catalysed reaction is guanosine(1516) in 16S rRNA + S-adenosyl-L-methionine = N(2)-methylguanosine(1516) in 16S rRNA + S-adenosyl-L-homocysteine + H(+). Its function is as follows. Specifically methylates the guanosine in position 1516 of 16S rRNA. The chain is Ribosomal RNA small subunit methyltransferase J from Shigella boydii serotype 18 (strain CDC 3083-94 / BS512).